The primary structure comprises 1669 residues: Collagen alpha-3(IV) chain (1669 aa).

Positions 1-28 (MHSKTAPRFLVFLLLTLLLLLAASPVAS) are cleaved as a signal peptide. Residues 29 to 42 (KGCVCKGKGQCLCA) form a 7S domain region. Residues 43–1436 (GTKGEKGEKG…KGNPGDRGTP (1394 aa)) form a triple-helical region region. 2 disordered regions span residues 44 to 473 (TKGE…EPGS) and 500 to 1439 (PGGR…PATG). Residues 54-68 (PGSPGFPGQKGFPGP) show a composition bias toward low complexity. Over residues 105-114 (PGLPGLPGHP) the composition is skewed to pro residues. An N-linked (GlcNAc...) asparagine glycan is attached at asparagine 126. A compositionally biased stretch (pro residues) spans 188–200 (PGFPGPAGPPGPP). Low complexity predominate over residues 202 to 211 (FFGLPGAMGP). Asparagine 253 carries an N-linked (GlcNAc...) asparagine glycan. Over residues 255-269 (SDFKGEKGDEGERGE) the composition is skewed to basic and acidic residues. Composition is skewed to low complexity over residues 279–290 (PGDSYGSEKGAP) and 382–393 (SPGLSRPGLRGP). Residues 416-437 (PPGPLGCPGSPGPPGPPGPPGC) show a composition bias toward pro residues. Over residues 551-560 (NPGDPGLRGL) the composition is skewed to low complexity. Pro residues-rich tracts occupy residues 596 to 617 (PPGPPGFPGPPGPAGPAGPPGY) and 654 to 665 (LGPPGPPGPPGQ). Over residues 666 to 684 (AGPRGLPGLPGPVGKCDPG) the composition is skewed to low complexity. Positions 778–787 (GTPGRGGLDG) are enriched in gly residues. The Cell attachment site motif lies at 830–832 (RGD). Residues 861-876 (CPGEMGPPGQKGYPGA) are compositionally biased toward low complexity. Residues 922–939 (KGEKGRPGAKGERGEKGK) are compositionally biased toward basic and acidic residues. The segment covering 970 to 985 (RGNPGLPGPKGLEGLP) has biased composition (low complexity). The Cell attachment site signature appears at 994–996 (RGD). Over residues 1092–1103 (SGPAGPDGAPGS) the composition is skewed to low complexity. Residues 1128-1146 (PGPPGSTGPPGPPGLPGLP) are compositionally biased toward pro residues. The Cell attachment site signature appears at 1152–1154 (RGD). A compositionally biased stretch (low complexity) spans 1228 to 1248 (PGAIIPGPKGDRGLPGLRGNP). Pro residues predominate over residues 1250–1259 (EPGPPGPPGP). The short motif at 1304–1306 (RGD) is the Cell attachment site element. The span at 1333–1343 (PVGPKGPPGPR) shows a compositional bias: pro residues. 2 stretches are compositionally biased toward low complexity: residues 1366–1379 (QPGMKGDPGPLGLP) and 1402–1429 (PAGTKGNKGLKGQQGPPGLDGLPGLKGN). Residues 1425-1443 (GLKGNPGDRGTPATGTRMR) form an epitope recognized by Goodpasture antibodies region. Residues 1444–1668 (GFIFTRHSQT…SRCQVCMKKR (225 aa)) form the Collagen IV NC1 domain. 6 cysteine pairs are disulfide-bonded: cysteine 1459–cysteine 1550, cysteine 1492–cysteine 1547, cysteine 1504–cysteine 1510, cysteine 1569–cysteine 1664, cysteine 1603–cysteine 1661, and cysteine 1615–cysteine 1621. The interval 1478–1556 (NKRAHGQDLG…CTVCEGPAMA (79 aa)) is required for the anti-angiogenic activity of tumstatin. An S-Lysyl-methionine sulfilimine (Met-Lys) (interchain with K-1650) cross-link involves residue methionine 1532. The required for the anti-tumor cell activity of tumstatin stretch occupies residues 1609 to 1627 (ASPFIECHGRGTCNYYSNS). An S-Lysyl-methionine sulfilimine (Lys-Met) (interchain with M-1532) cross-link involves residue lysine 1650.

Belongs to the type IV collagen family. As to quaternary structure, there are six type IV collagen isoforms, alpha 1(IV)-alpha 6(IV), each of which can form a triple helix structure with 2 other chains to generate type IV collagen network. The alpha 3(IV) chain forms a triple helical protomer with alpha 4(IV) and alpha 5(IV); this triple helical structure dimerizes through NC1-NC1 domain interactions such that the alpha 3(IV), alpha 4(IV) and alpha 5(IV) chains of one protomer connect with the alpha 5(IV), alpha 4(IV) and alpha 3(IV) chains of the opposite promoter, respectively. Interacts with ITGB3. Associates with LAMB2 at the neuromuscular junction and in GBM. Prolines at the third position of the tripeptide repeating unit (G-X-Y) are hydroxylated in some or all of the chains. In terms of processing, type IV collagens contain numerous cysteine residues which are involved in inter- and intramolecular disulfide bonding. 12 of these, located in the NC1 domain, are conserved in all known type IV collagens. Post-translationally, the trimeric structure of the NC1 domains is stabilized by covalent bonds between Lys and Met residues. Phosphorylated. Thought to be phosphorylated by CERT, but CERT does not have kinase activity. In terms of tissue distribution, highly expressed in kidney and lung. Detected at lower levels in heart, muscle and skin.

Its subcellular location is the secreted. The protein resides in the extracellular space. It localises to the extracellular matrix. It is found in the basement membrane. Type IV collagen is the major structural component of glomerular basement membranes (GBM), forming a 'chicken-wire' meshwork together with laminins, proteoglycans and entactin/nidogen. In terms of biological role, tumstatin, a cleavage fragment corresponding to the collagen alpha 3(IV) NC1 domain, possesses both anti-angiogenic and anti-tumor cell activity; these two anti-tumor properties may be regulated via RGD-independent ITGB3-mediated mechanisms. The sequence is that of Collagen alpha-3(IV) chain from Mus musculus (Mouse).